We begin with the raw amino-acid sequence, 212 residues long: ATP phosphoribosyltransferase (212 aa).

The protein belongs to the ATP phosphoribosyltransferase family. Short subfamily. Heteromultimer composed of HisG and HisZ subunits.

The protein localises to the cytoplasm. The enzyme catalyses 1-(5-phospho-beta-D-ribosyl)-ATP + diphosphate = 5-phospho-alpha-D-ribose 1-diphosphate + ATP. Its pathway is amino-acid biosynthesis; L-histidine biosynthesis; L-histidine from 5-phospho-alpha-D-ribose 1-diphosphate: step 1/9. Its function is as follows. Catalyzes the condensation of ATP and 5-phosphoribose 1-diphosphate to form N'-(5'-phosphoribosyl)-ATP (PR-ATP). Has a crucial role in the pathway because the rate of histidine biosynthesis seems to be controlled primarily by regulation of HisG enzymatic activity. The chain is ATP phosphoribosyltransferase from Prochlorococcus marinus (strain MIT 9515).